The sequence spans 408 residues: GTPase HflX (408 aa).

A Hflx-type G domain is found at 198–361 (PRVSLVGYTN…LIVREMERHY (164 aa)). GTP contacts are provided by residues 204 to 211 (GYTNAGKS), 229 to 233 (FVTLD), 251 to 254 (DTVG), 317 to 320 (NKAD), and 339 to 341 (SAK). Positions 211 and 231 each coordinate Mg(2+).

It belongs to the TRAFAC class OBG-HflX-like GTPase superfamily. HflX GTPase family. As to quaternary structure, monomer. Associates with the 50S ribosomal subunit. Mg(2+) serves as cofactor.

It is found in the cytoplasm. In terms of biological role, GTPase that associates with the 50S ribosomal subunit and may have a role during protein synthesis or ribosome biogenesis. The chain is GTPase HflX from Spirochaeta thermophila (strain ATCC 49972 / DSM 6192 / RI 19.B1).